The following is a 310-amino-acid chain: Zinc finger CCCH domain-containing protein 14 (310 aa).

The interval 56–75 (ESLSPSPPSSSSPPSRVDTT) is disordered. Residues 84-129 (KLILEYDELNEHYELCLNRLQSLMTELDSLRHENDSLRFENSDLLK) are a coiled coil. The segment covering 155 to 167 (QISDSRSAKRNNQ) has biased composition (basic and acidic residues). The segment at 155–174 (QISDSRSAKRNNQERNSLPK) is disordered. C3H1-type zinc fingers lie at residues 232–260 (MMKT…HGID) and 270–298 (RYKT…HSLT).

In terms of tissue distribution, highly expressed in secondary cell wall-forming tissues and the xylem cells of roots. Expressed predominantly in inflorescence stems, flowers and siliques. Highly expressed in the basal portion of stems, where cells are undergoing secondary cell wall thickening.

Functions probably as a transcriptional factor that activates genes involved in secondary cell wall biosynthesis. May play a role in both transcriptional and post-transcriptional regulation. Binds to ssDNA, dsDNA, and ribohomopolymers in vitro. Maybe involved in post-transcriptional regulation of its target genes. Targets RNA of a polygalacturonase, a well-known cell wall modifying gene. Functions redudantly with C3H15 to regulate secondary cell wall formation. C3H14 and C3H15 have overlapping roles in the regulation of secondary cell wall formation and anther development. C3H14 may contribute more to secondary cell wall thickening while C3H15 could be more important in anther development. May regulate at both the transcriptional and post-transcriptional levels the expression of many genes involved in various biological processes, particularly those associated with cell wall metabolism and pollen development. The chain is Zinc finger CCCH domain-containing protein 14 from Arabidopsis thaliana (Mouse-ear cress).